Here is a 291-residue protein sequence, read N- to C-terminus: Elongation factor Ts (291 aa).

Residues 79-82 are involved in Mg(2+) ion dislocation from EF-Tu; it reads TDFV.

The protein belongs to the EF-Ts family.

The protein resides in the cytoplasm. Functionally, associates with the EF-Tu.GDP complex and induces the exchange of GDP to GTP. It remains bound to the aminoacyl-tRNA.EF-Tu.GTP complex up to the GTP hydrolysis stage on the ribosome. The protein is Elongation factor Ts of Leuconostoc mesenteroides subsp. mesenteroides (strain ATCC 8293 / DSM 20343 / BCRC 11652 / CCM 1803 / JCM 6124 / NCDO 523 / NBRC 100496 / NCIMB 8023 / NCTC 12954 / NRRL B-1118 / 37Y).